The following is a 121-amino-acid chain: Darcynin homolog (121 aa).

The protein belongs to the darcynin family.

The chain is Darcynin homolog from Streptomyces avermitilis (strain ATCC 31267 / DSM 46492 / JCM 5070 / NBRC 14893 / NCIMB 12804 / NRRL 8165 / MA-4680).